Consider the following 1476-residue polypeptide: SH3 and multiple ankyrin repeat domains protein 2 (1476 aa).

Residues 66-76 are compositionally biased toward polar residues; the sequence is LSPQLLQQTPS. Positions 66–134 are disordered; sequence LSPQLLQQTP…GANKDSLSTF (69 aa). The region spanning 147 to 206 is the SH3 domain; sequence VPGRLFVAVKPYQPQVDGEIPLHRGDRVKVLSIGEGGFWEGSARGHIGWFPAECVEEVQC. Phosphoserine is present on valine 162. Residues 247–341 enclose the PDZ domain; that stretch reads TVVLQKKDNE…HLILKVVTVT (95 aa). Serine 372 carries the phosphoserine modification. The disordered stretch occupies residues 391-412; the sequence is RKKKDKPEEIVPASKPSRTAEN. Serine 456 is modified (phosphoserine). Threonine 485 bears the Phosphothreonine mark. A disordered region spans residues 503–533; that stretch reads LSMPDTSEDIPPPPQSVPPSPPPPSPTTYNC. Over residues 512–528 the composition is skewed to pro residues; sequence IPPPPQSVPPSPPPPSP. Serine 586 bears the Phosphoserine mark. 3 disordered regions span residues 659-916, 946-983, and 1057-1153; these read TIIV…KDRR, VPMAGPPLEEEEDREDGDTKPDHSPSTVPEGVPKTEGA, and PALA…ESMD. A compositionally biased stretch (low complexity) spans 666–678; the sequence is STSSSGKSSQGSS. Over residues 711–722 the composition is skewed to basic and acidic residues; it reads VRDREKRLEARR. At serine 724 the chain carries Phosphoserine. Over residues 783–795 the composition is skewed to gly residues; it reads LGGGEAGAQGEAG. Over residues 833-846 the composition is skewed to low complexity; it reads RLLDPSSPLALALS. Composition is skewed to basic and acidic residues over residues 847–868 and 899–916; these read ARDRAMQESQQGHKGEAPKADL and RRQETENKYETDLGKDRR. Threonine 903 bears the Phosphothreonine mark. Over residues 1070 to 1085 the composition is skewed to polar residues; it reads TSQPPTLNSSQPANST. The segment covering 1119–1130 has biased composition (basic and acidic residues); sequence VDSRSSSDHHLE. Residues 1131 to 1151 show a composition bias toward low complexity; it reads TTSTISTVSSISTLSSEGGES. The short motif at 1169-1175 is the SH3-binding element; the sequence is PPVPPKP. Disordered stretches follow at residues 1195–1216 and 1260–1403; these read EDTDGFVIPPPAPPPPPGSAQA and NRGK…ISNK. The span at 1202–1212 shows a compositional bias: pro residues; the sequence is IPPPAPPPPPG. The span at 1291-1305 shows a compositional bias: low complexity; that stretch reads STVSGTRSTTVTFTV. O-linked (GlcNAc) threonine glycosylation is present at threonine 1292. The segment covering 1307–1317 has biased composition (polar residues); sequence PGTSQPITLQS. Residues serine 1334 and serine 1338 each carry the phosphoserine modification. Polar residues predominate over residues 1364-1375; the sequence is LSDVFSLPSQSP. A compositionally biased stretch (low complexity) spans 1387 to 1401; that stretch reads RSRSPSPSILQQPIS. An SAM domain is found at 1413–1476; the sequence is WTKPDVADWL…ERALKQLLDR (64 aa).

This sequence belongs to the SHANK family. In terms of assembly, is part of a complex with DLG4/PSD-95 and DLGAP1/GKAP. Interacts with CTTN/cortactin SH3 domain, DLGAP1/GKAP and alpha-latrotoxin receptor 1. Interacts with DNM2, DBNL, GRID2, BAIAP2, SLC9A3, PLCB3 and CFTR. Interacts (via proline-rich region) with PDE4D. Interacts with ABI1 (via SH3 domain). As to expression, detected in brain (at protein level), where it is highly expressed in Purkinje cells.

It is found in the apical cell membrane. The protein localises to the cytoplasm. It localises to the synapse. The protein resides in the postsynaptic density. Its subcellular location is the cell projection. It is found in the dendritic spine. The protein localises to the growth cone. Its function is as follows. Seems to be an adapter protein in the postsynaptic density (PSD) of excitatory synapses that interconnects receptors of the postsynaptic membrane including NMDA-type and metabotropic glutamate receptors, and the actin-based cytoskeleton. May play a role in the structural and functional organization of the dendritic spine and synaptic junction. The polypeptide is SH3 and multiple ankyrin repeat domains protein 2 (Shank2) (Mus musculus (Mouse)).